We begin with the raw amino-acid sequence, 417 residues long: Serine hydroxymethyltransferase (417 aa).

Residues Leu-120 and 124 to 126 (GHL) each bind (6S)-5,6,7,8-tetrahydrofolate. Lys-229 is subject to N6-(pyridoxal phosphate)lysine. Residue 354-356 (SPF) participates in (6S)-5,6,7,8-tetrahydrofolate binding.

The protein belongs to the SHMT family. In terms of assembly, homodimer. Pyridoxal 5'-phosphate is required as a cofactor.

The protein localises to the cytoplasm. It catalyses the reaction (6R)-5,10-methylene-5,6,7,8-tetrahydrofolate + glycine + H2O = (6S)-5,6,7,8-tetrahydrofolate + L-serine. It participates in one-carbon metabolism; tetrahydrofolate interconversion. Its pathway is amino-acid biosynthesis; glycine biosynthesis; glycine from L-serine: step 1/1. In terms of biological role, catalyzes the reversible interconversion of serine and glycine with tetrahydrofolate (THF) serving as the one-carbon carrier. This reaction serves as the major source of one-carbon groups required for the biosynthesis of purines, thymidylate, methionine, and other important biomolecules. Also exhibits THF-independent aldolase activity toward beta-hydroxyamino acids, producing glycine and aldehydes, via a retro-aldol mechanism. The protein is Serine hydroxymethyltransferase of Acinetobacter radioresistens.